We begin with the raw amino-acid sequence, 361 residues long: 3-dehydroquinate synthase (361 aa).

Residues 104-108, 128-129, Lys-141, Lys-150, and 168-171 contribute to the NAD(+) site; these read GVIGD, TT, and FLRT. Zn(2+)-binding residues include Glu-183, His-246, and His-263.

Belongs to the sugar phosphate cyclases superfamily. Dehydroquinate synthase family. Co(2+) is required as a cofactor. Zn(2+) serves as cofactor. It depends on NAD(+) as a cofactor.

It localises to the cytoplasm. It carries out the reaction 7-phospho-2-dehydro-3-deoxy-D-arabino-heptonate = 3-dehydroquinate + phosphate. It participates in metabolic intermediate biosynthesis; chorismate biosynthesis; chorismate from D-erythrose 4-phosphate and phosphoenolpyruvate: step 2/7. Catalyzes the conversion of 3-deoxy-D-arabino-heptulosonate 7-phosphate (DAHP) to dehydroquinate (DHQ). The chain is 3-dehydroquinate synthase from Opitutus terrae (strain DSM 11246 / JCM 15787 / PB90-1).